The sequence spans 118 residues: V-type proton ATPase subunit G 1 (118 aa).

Alanine 2 bears the N-acetylalanine mark.

It belongs to the V-ATPase G subunit family. In terms of assembly, V-ATPase is a heteromultimeric enzyme made up of two complexes: the ATP-hydrolytic V1 complex and the proton translocation V0 complex. The V1 complex consists of three catalytic AB heterodimers that form a heterohexamer, three peripheral stalks each consisting of EG heterodimers, one central rotor including subunits D and F, and the regulatory subunits C and H. The proton translocation complex V0 consists of the proton transport subunit a, a ring of proteolipid subunits c9c'', rotary subunit d, subunits e and f, and the accessory subunits ATP6AP1/Ac45 and ATP6AP2/PRR. As to expression, kidney; localizes to early distal nephron, encompassing thick ascending limbs and distal convoluted tubules (at protein level). Ubiquitous.

The protein localises to the apical cell membrane. Subunit of the V1 complex of vacuolar(H+)-ATPase (V-ATPase), a multisubunit enzyme composed of a peripheral complex (V1) that hydrolyzes ATP and a membrane integral complex (V0) that translocates protons. V-ATPase is responsible for acidifying and maintaining the pH of intracellular compartments and in some cell types, is targeted to the plasma membrane, where it is responsible for acidifying the extracellular environment. In aerobic conditions, involved in intracellular iron homeostasis, thus triggering the activity of Fe(2+) prolyl hydroxylase (PHD) enzymes, and leading to HIF1A hydroxylation and subsequent proteasomal degradation. The sequence is that of V-type proton ATPase subunit G 1 (ATP6V1G1) from Homo sapiens (Human).